A 66-amino-acid polypeptide reads, in one-letter code: Large ribosomal subunit protein bL35 (66 aa).

The segment covering 1–16 (MPKQKTHRASAKRFKR) has biased composition (basic residues). A disordered region spans residues 1-22 (MPKQKTHRASAKRFKRTGSGGL).

The protein belongs to the bacterial ribosomal protein bL35 family.

The polypeptide is Large ribosomal subunit protein bL35 (Streptococcus suis (strain 05ZYH33)).